The chain runs to 119 residues: Protein MGF 110-11L (119 aa).

Residues 1-17 form the signal peptide; the sequence is MKVLLGLLLGYSVLILA.

Belongs to the asfivirus MGF 110 family.

This chain is Protein MGF 110-11L, found in Ornithodoros (relapsing fever ticks).